The chain runs to 378 residues: Probable pectin lyase A (378 aa).

An N-terminal signal peptide occupies residues 1–18 (MKYASFLALVGFITSTSA). Cystine bridges form between cysteine 81-cysteine 100 and cysteine 90-cysteine 224. The active site involves arginine 254. A disulfide bridge links cysteine 321 with cysteine 329.

It belongs to the polysaccharide lyase 1 family.

It is found in the secreted. The catalysed reaction is Eliminative cleavage of (1-&gt;4)-alpha-D-galacturonan methyl ester to give oligosaccharides with 4-deoxy-6-O-methyl-alpha-D-galact-4-enuronosyl groups at their non-reducing ends.. Pectinolytic enzymes consist of four classes of enzymes: pectin lyase, polygalacturonase, pectin methylesterase and rhamnogalacturonase. Among pectinolytic enzymes, pectin lyase is the most important in depolymerization of pectin, since it cleaves internal glycosidic bonds of highly methylated pectins. In Aspergillus clavatus (strain ATCC 1007 / CBS 513.65 / DSM 816 / NCTC 3887 / NRRL 1 / QM 1276 / 107), this protein is Probable pectin lyase A (pelA).